Here is a 689-residue protein sequence, read N- to C-terminus: tRNA 5-methylaminomethyl-2-thiouridine biosynthesis bifunctional protein MnmC (689 aa).

Positions 1 to 245 are tRNA (mnm(5)s(2)U34)-methyltransferase; the sequence is MNQRPIQTAT…KREMLTGTLP (245 aa). Residues 270–689 are FAD-dependent cmnm(5)s(2)U34 oxidoreductase; the sequence is IGGGIVSALT…RSPATQESSR (420 aa).

The protein in the N-terminal section; belongs to the methyltransferase superfamily. tRNA (mnm(5)s(2)U34)-methyltransferase family. This sequence in the C-terminal section; belongs to the DAO family. Requires FAD as cofactor.

It is found in the cytoplasm. The enzyme catalyses 5-aminomethyl-2-thiouridine(34) in tRNA + S-adenosyl-L-methionine = 5-methylaminomethyl-2-thiouridine(34) in tRNA + S-adenosyl-L-homocysteine + H(+). Its function is as follows. Catalyzes the last two steps in the biosynthesis of 5-methylaminomethyl-2-thiouridine (mnm(5)s(2)U) at the wobble position (U34) in tRNA. Catalyzes the FAD-dependent demodification of cmnm(5)s(2)U34 to nm(5)s(2)U34, followed by the transfer of a methyl group from S-adenosyl-L-methionine to nm(5)s(2)U34, to form mnm(5)s(2)U34. This is tRNA 5-methylaminomethyl-2-thiouridine biosynthesis bifunctional protein MnmC from Yersinia pseudotuberculosis serotype I (strain IP32953).